A 310-amino-acid chain; its full sequence is Protein N-terminal asparagine amidohydrolase (310 aa).

Monomer.

It is found in the cytoplasm. It carries out the reaction N-terminal L-asparaginyl-[protein] + H2O + H(+) = N-terminal L-aspartyl-[protein] + NH4(+). Its activity is regulated as follows. Inhibited by micromolar concentrations of copper and zinc ions. In terms of biological role, N-terminal asparagine deamidase that mediates deamidation of N-terminal asparagine residues to aspartate. Required for the ubiquitin-dependent turnover of intracellular proteins that initiate with Met-Asn. These proteins are acetylated on the retained initiator methionine and can subsequently be modified by the removal of N-acetyl methionine by acylaminoacid hydrolase (AAH). Conversion of the resulting N-terminal asparagine to aspartate by NTAN1/PNAD renders the protein susceptible to arginylation, polyubiquitination and degradation as specified by the N-end rule. This enzyme does not act on substrates with internal or C-terminal asparagines and does not act on glutamine residues in any position, nor on acetylated N-terminal peptidyl Asn. The chain is Protein N-terminal asparagine amidohydrolase (NTAN1) from Homo sapiens (Human).